Consider the following 213-residue polypeptide: Putative protein Brevis radix-like 3 (213 aa).

The segment at Cys7–Asp27 is disordered. Residues Arg158–Leu213 form the BRX domain.

This sequence belongs to the BRX family.

The protein localises to the nucleus. This Oryza sativa subsp. japonica (Rice) protein is Putative protein Brevis radix-like 3 (BRXL3).